A 650-amino-acid chain; its full sequence is Acetyl-coenzyme A synthetase (650 aa).

CoA contacts are provided by residues 191 to 194 (RGGR), Thr-311, and Asn-335. Residues 387–389 (GEP), 411–416 (DTWWQT), Asp-500, and Arg-515 each bind ATP. Ser-523 lines the CoA pocket. ATP is bound at residue Arg-526. Val-537, His-539, and Val-542 together coordinate Mg(2+). CoA is bound at residue Arg-584. N6-acetyllysine is present on Lys-609.

This sequence belongs to the ATP-dependent AMP-binding enzyme family. The cofactor is Mg(2+). Post-translationally, acetylated. Deacetylation by the SIR2-homolog deacetylase activates the enzyme.

It catalyses the reaction acetate + ATP + CoA = acetyl-CoA + AMP + diphosphate. Catalyzes the conversion of acetate into acetyl-CoA (AcCoA), an essential intermediate at the junction of anabolic and catabolic pathways. AcsA undergoes a two-step reaction. In the first half reaction, AcsA combines acetate with ATP to form acetyl-adenylate (AcAMP) intermediate. In the second half reaction, it can then transfer the acetyl group from AcAMP to the sulfhydryl group of CoA, forming the product AcCoA. The protein is Acetyl-coenzyme A synthetase of Shewanella sp. (strain MR-7).